Here is a 310-residue protein sequence, read N- to C-terminus: Tyrosine recombinase XerC (310 aa).

The Core-binding (CB) domain maps to 22–103 (SQMLEAIEDF…SVKSFSTWAV (82 aa)). Residues 124 to 304 (NLPRVLGEVQ…SSQRLLEAFR (181 aa)) enclose the Tyr recombinase domain. Catalysis depends on residues Arg165, Lys189, His256, Arg259, and His282. Tyr291 serves as the catalytic O-(3'-phospho-DNA)-tyrosine intermediate.

It belongs to the 'phage' integrase family. XerC subfamily. As to quaternary structure, forms a cyclic heterotetrameric complex composed of two molecules of XerC and two molecules of XerD.

It localises to the cytoplasm. In terms of biological role, site-specific tyrosine recombinase, which acts by catalyzing the cutting and rejoining of the recombining DNA molecules. The XerC-XerD complex is essential to convert dimers of the bacterial chromosome into monomers to permit their segregation at cell division. It also contributes to the segregational stability of plasmids. The chain is Tyrosine recombinase XerC from Corynebacterium efficiens (strain DSM 44549 / YS-314 / AJ 12310 / JCM 11189 / NBRC 100395).